A 1188-amino-acid chain; its full sequence is Probable phosphoenolpyruvate synthase (1188 aa).

The DOD-type homing endonuclease domain maps to 536-670 (LGGAVLSDGH…LIVGLYRLGI (135 aa)). The active-site Tele-phosphohistidine intermediate is the His-824. Residues Arg-917, Arg-964, Glu-1061, Gly-1083, Thr-1084, Asn-1085, and Asp-1086 each coordinate substrate. Glu-1061 contributes to the Mg(2+) binding site. Asp-1086 is a Mg(2+) binding site. Cys-1133 functions as the Proton donor in the catalytic mechanism.

The protein belongs to the PEP-utilizing enzyme family. Requires Mg(2+) as cofactor. This protein undergoes a protein self splicing that involves a post-translational excision of the intervening region (intein) followed by peptide ligation.

It carries out the reaction pyruvate + ATP + H2O = phosphoenolpyruvate + AMP + phosphate + 2 H(+). It participates in carbohydrate biosynthesis; gluconeogenesis. Its function is as follows. Catalyzes the phosphorylation of pyruvate to phosphoenolpyruvate. This is Probable phosphoenolpyruvate synthase (ppsA) from Methanocaldococcus jannaschii (strain ATCC 43067 / DSM 2661 / JAL-1 / JCM 10045 / NBRC 100440) (Methanococcus jannaschii).